A 285-amino-acid chain; its full sequence is Acetyl-coenzyme A carboxylase carboxyl transferase subunit beta (285 aa).

Residues 29–285 (IMTKCPKCKK…ILKIHQEVSN (257 aa)) form the CoA carboxyltransferase N-terminal domain. Residues Cys33, Cys36, Cys52, and Cys55 each coordinate Zn(2+). A C4-type zinc finger spans residues 33-55 (CPKCKKIMYTKELNENLNVCFNC).

It belongs to the AccD/PCCB family. Acetyl-CoA carboxylase is a heterohexamer composed of biotin carboxyl carrier protein (AccB), biotin carboxylase (AccC) and two subunits each of ACCase subunit alpha (AccA) and ACCase subunit beta (AccD). Requires Zn(2+) as cofactor.

Its subcellular location is the cytoplasm. It carries out the reaction N(6)-carboxybiotinyl-L-lysyl-[protein] + acetyl-CoA = N(6)-biotinyl-L-lysyl-[protein] + malonyl-CoA. The protein operates within lipid metabolism; malonyl-CoA biosynthesis; malonyl-CoA from acetyl-CoA: step 1/1. Its function is as follows. Component of the acetyl coenzyme A carboxylase (ACC) complex. Biotin carboxylase (BC) catalyzes the carboxylation of biotin on its carrier protein (BCCP) and then the CO(2) group is transferred by the transcarboxylase to acetyl-CoA to form malonyl-CoA. This chain is Acetyl-coenzyme A carboxylase carboxyl transferase subunit beta, found in Staphylococcus epidermidis (strain ATCC 12228 / FDA PCI 1200).